The primary structure comprises 258 residues: Phosphate import ATP-binding protein PstB (258 aa).

Positions 13 to 253 (ITVENLNLWY…PREKSTEDYI (241 aa)) constitute an ABC transporter domain. Position 45-52 (45-52 (GPSGCGKS)) interacts with ATP.

The protein belongs to the ABC transporter superfamily. Phosphate importer (TC 3.A.1.7) family. As to quaternary structure, the complex is composed of two ATP-binding proteins (PstB), two transmembrane proteins (PstC and PstA) and a solute-binding protein (PstS).

It is found in the cell membrane. The catalysed reaction is phosphate(out) + ATP + H2O = ADP + 2 phosphate(in) + H(+). In terms of biological role, part of the ABC transporter complex PstSACB involved in phosphate import. Responsible for energy coupling to the transport system. This Methanosarcina mazei (strain ATCC BAA-159 / DSM 3647 / Goe1 / Go1 / JCM 11833 / OCM 88) (Methanosarcina frisia) protein is Phosphate import ATP-binding protein PstB.